The sequence spans 290 residues: Small ribosomal subunit biogenesis GTPase RsgA (290 aa).

Positions Asp-62–Leu-219 constitute a CP-type G domain. Residues Asn-111 to Asp-114 and Gly-162 to Thr-170 each bind GTP. Residues Cys-243, Cys-248, His-250, and Cys-256 each contribute to the Zn(2+) site.

The protein belongs to the TRAFAC class YlqF/YawG GTPase family. RsgA subfamily. In terms of assembly, monomer. Associates with 30S ribosomal subunit, binds 16S rRNA. The cofactor is Zn(2+).

The protein resides in the cytoplasm. One of several proteins that assist in the late maturation steps of the functional core of the 30S ribosomal subunit. Helps release RbfA from mature subunits. May play a role in the assembly of ribosomal proteins into the subunit. Circularly permuted GTPase that catalyzes slow GTP hydrolysis, GTPase activity is stimulated by the 30S ribosomal subunit. The sequence is that of Small ribosomal subunit biogenesis GTPase RsgA from Clostridium novyi (strain NT).